The chain runs to 283 residues: NAD kinase (283 aa).

Aspartate 66 serves as the catalytic Proton acceptor. NAD(+)-binding positions include 66 to 67 (DG), 140 to 141 (ND), arginine 151, arginine 168, aspartate 170, and glutamine 240.

It belongs to the NAD kinase family. A divalent metal cation serves as cofactor.

The protein resides in the cytoplasm. The catalysed reaction is NAD(+) + ATP = ADP + NADP(+) + H(+). Involved in the regulation of the intracellular balance of NAD and NADP, and is a key enzyme in the biosynthesis of NADP. Catalyzes specifically the phosphorylation on 2'-hydroxyl of the adenosine moiety of NAD to yield NADP. This chain is NAD kinase, found in Syntrophobacter fumaroxidans (strain DSM 10017 / MPOB).